We begin with the raw amino-acid sequence, 126 residues long: Membrane-anchored ubiquitin-fold protein 2 (126 aa).

A Ubiquitin-like domain is found at 14–79 (VEVRFRLDDG…VLENNRTLAE (66 aa)). Residue Cys123 is modified to Cysteine methyl ester. Residue Cys123 is the site of S-geranylgeranyl cysteine attachment. A propeptide spans 124–126 (TIL) (removed in mature form).

The protein localises to the cell membrane. Its function is as follows. May serve as docking site to facilitate the association of other proteins to the plasma membrane. This Oryza sativa subsp. japonica (Rice) protein is Membrane-anchored ubiquitin-fold protein 2 (MUB2).